We begin with the raw amino-acid sequence, 201 residues long: ATP-dependent Clp protease proteolytic subunit (201 aa).

Residue Ser-98 is the Nucleophile of the active site. His-123 is a catalytic residue.

Belongs to the peptidase S14 family. In terms of assembly, fourteen ClpP subunits assemble into 2 heptameric rings which stack back to back to give a disk-like structure with a central cavity, resembling the structure of eukaryotic proteasomes.

It is found in the cytoplasm. It catalyses the reaction Hydrolysis of proteins to small peptides in the presence of ATP and magnesium. alpha-casein is the usual test substrate. In the absence of ATP, only oligopeptides shorter than five residues are hydrolyzed (such as succinyl-Leu-Tyr-|-NHMec, and Leu-Tyr-Leu-|-Tyr-Trp, in which cleavage of the -Tyr-|-Leu- and -Tyr-|-Trp bonds also occurs).. In terms of biological role, cleaves peptides in various proteins in a process that requires ATP hydrolysis. Has a chymotrypsin-like activity. Plays a major role in the degradation of misfolded proteins. The chain is ATP-dependent Clp protease proteolytic subunit from Neorickettsia sennetsu (strain ATCC VR-367 / Miyayama) (Ehrlichia sennetsu).